Here is a 442-residue protein sequence, read N- to C-terminus: 5-methylthioadenosine/S-adenosylhomocysteine deaminase (442 aa).

Zn(2+)-binding residues include H72 and H74. Substrate is bound by residues E101 and H194. H221 contacts Zn(2+). Substrate contacts are provided by E224 and D309. D309 contributes to the Zn(2+) binding site.

It belongs to the metallo-dependent hydrolases superfamily. MTA/SAH deaminase family. It depends on Zn(2+) as a cofactor.

It catalyses the reaction S-adenosyl-L-homocysteine + H2O + H(+) = S-inosyl-L-homocysteine + NH4(+). The catalysed reaction is S-methyl-5'-thioadenosine + H2O + H(+) = S-methyl-5'-thioinosine + NH4(+). In terms of biological role, catalyzes the deamination of 5-methylthioadenosine and S-adenosyl-L-homocysteine into 5-methylthioinosine and S-inosyl-L-homocysteine, respectively. Is also able to deaminate adenosine. This Teredinibacter turnerae (strain ATCC 39867 / T7901) protein is 5-methylthioadenosine/S-adenosylhomocysteine deaminase.